We begin with the raw amino-acid sequence, 427 residues long: tRNA(Ile)-lysidine synthase (427 aa).

27–32 contributes to the ATP binding site; that stretch reads SGGVDS.

It belongs to the tRNA(Ile)-lysidine synthase family.

It is found in the cytoplasm. It carries out the reaction cytidine(34) in tRNA(Ile2) + L-lysine + ATP = lysidine(34) in tRNA(Ile2) + AMP + diphosphate + H(+). Its function is as follows. Ligates lysine onto the cytidine present at position 34 of the AUA codon-specific tRNA(Ile) that contains the anticodon CAU, in an ATP-dependent manner. Cytidine is converted to lysidine, thus changing the amino acid specificity of the tRNA from methionine to isoleucine. This is tRNA(Ile)-lysidine synthase from Streptococcus equi subsp. equi (strain 4047).